A 421-amino-acid chain; its full sequence is MSKTHLTEQKFSDFALHPKVVEVLEKKGFHNCTPIQALALPLTLAGRDVAGQAQTGTGKTMAFLTSTFHYLLSHPAIADRKVNQPRALIMAPTRELAVQIHADAEPLAEATGLKLGLAYGGDGYDKQLKVLESGVDILIGTTGRLIDYAKQNHINLGAIQVVVLDEADRMYDLGFIKDIRWLFRRMPPANQRLNMLFSATLSYRVRELAFEQMNNAEYIEVEPEQKTGHRIKEELFYPSNEEKMRLLQTLIEEEWPDRAIIFANTKHRCEEIWGHLAADGHRVGLLTGDVAQKKRLRILDEFTRGDLDILVATDVAARGLHIPAVTHVFNYDLPDDCEDYVHRIGRTGRAGASGHSISLACEEYALNLPAIETYIGHSIPVSKYNPDALMTDLPKPLRLTRPRTGNGPRRTGAPRNRRRSG.

The short motif at 9 to 37 is the Q motif element; sequence QKFSDFALHPKVVEVLEKKGFHNCTPIQA. One can recognise a Helicase ATP-binding domain in the interval 40 to 219; the sequence is LPLTLAGRDV…FEQMNNAEYI (180 aa). 53–60 is an ATP binding site; sequence AQTGTGKT. The short motif at 165 to 168 is the DEAD box element; the sequence is DEAD. One can recognise a Helicase C-terminal domain in the interval 245-390; that stretch reads RLLQTLIEEE…VSKYNPDALM (146 aa). Positions 392–421 are disordered; sequence DLPKPLRLTRPRTGNGPRRTGAPRNRRRSG. A compositionally biased stretch (low complexity) spans 402-414; sequence PRTGNGPRRTGAP.

Belongs to the DEAD box helicase family. RhlB subfamily. In terms of assembly, component of the RNA degradosome, which is a multiprotein complex involved in RNA processing and mRNA degradation.

The protein resides in the cytoplasm. It carries out the reaction ATP + H2O = ADP + phosphate + H(+). Its function is as follows. DEAD-box RNA helicase involved in RNA degradation. Has RNA-dependent ATPase activity and unwinds double-stranded RNA. The polypeptide is ATP-dependent RNA helicase RhlB (Shigella boydii serotype 18 (strain CDC 3083-94 / BS512)).